Here is a 337-residue protein sequence, read N- to C-terminus: Methylthioribose-1-phosphate isomerase (337 aa).

Substrate contacts are provided by residues Arg-51–Ala-53, Arg-88, and Gln-187. Catalysis depends on Asp-228, which acts as the Proton donor. Position 238 to 239 (Asn-238 to Lys-239) interacts with substrate.

It belongs to the eIF-2B alpha/beta/delta subunits family. MtnA subfamily.

It carries out the reaction 5-(methylsulfanyl)-alpha-D-ribose 1-phosphate = 5-(methylsulfanyl)-D-ribulose 1-phosphate. It participates in amino-acid biosynthesis; L-methionine biosynthesis via salvage pathway; L-methionine from S-methyl-5-thio-alpha-D-ribose 1-phosphate: step 1/6. In terms of biological role, catalyzes the interconversion of methylthioribose-1-phosphate (MTR-1-P) into methylthioribulose-1-phosphate (MTRu-1-P). This Anaeromyxobacter sp. (strain Fw109-5) protein is Methylthioribose-1-phosphate isomerase.